The following is a 436-amino-acid chain: Probable ABC transporter binding protein NosD (436 aa).

A signal peptide spans 1 to 27; that stretch reads MFKAQATFSRYSAAVSLLLLFSGAAQA. 8 PbH1 repeats span residues 85-113, 115-136, 137-166, 167-188, 189-210, 233-255, 293-314, and 316-354; these read APDVLVEGCTLYEWGSDLTAMDSAVFILP, AERAQISNNRMRGPGFGVFVDG, TRDVQVIGNEIDGDAGVRSQDRGNGIHLFA, VSGARVLHNHVRNARDGIYIDT, SNGNHLEGNVIEDVRYGVHYMF, SRKLTVTGNRSEQDQNYGILMNY, SLFNTIENNHFEKSSLGIHLTA, and SEDNRISGNAFVGNQQQVKYVASRTQEWSVDGRGNYWSD.

This sequence belongs to the NosD family. The complex may be composed of an ATP-binding protein (NosF), a transmembrane protein (NosY) and a solute-binding protein (NosD).

The protein localises to the periplasm. Functionally, required for the assembly of the copper chromophores of nitrous oxide reductase. Could be part of the ABC transporter complex NosDFY. The chain is Probable ABC transporter binding protein NosD from Stutzerimonas stutzeri (Pseudomonas stutzeri).